We begin with the raw amino-acid sequence, 337 residues long: MQEERRLAVLRAIVEDYVATEEPVGSKALVERHGLGVSPATVRNDMAALEDEGYITQPHTSAGRVPTDKGYRLFVDRLTTIKPMSTAEKRAIATILDGAIDLDDVVQRSVRLLAQLTRQVAVVQYPTLSRSTVRHIELVALTPTRLLVVLILSTGRVEQRLVDLAAELGEEDLADLRTVVNRAALGEIIADAATALRALVPAEDATPTGAVVDVLVEAMSDHRSDERIAVGGAANLARFGDSFDSAVRPLLEALEEHVVLLKLLGEATAGEILTVRIGHEGPYQELSSTSVVATGYGPGDEALARLGIVGPTRMDYAGSMAAVRAVARYVSRILDEG.

This sequence belongs to the HrcA family.

Negative regulator of class I heat shock genes (grpE-dnaK-dnaJ and groELS operons). Prevents heat-shock induction of these operons. This is Heat-inducible transcription repressor HrcA from Nocardioides sp. (strain ATCC BAA-499 / JS614).